The primary structure comprises 361 residues: 3-dehydroquinate synthase (361 aa).

NAD(+) contacts are provided by residues 72 to 77, 130 to 131, lysine 142, and lysine 151; these read SGEKEK and TT. Glutamate 184, histidine 247, and histidine 264 together coordinate Zn(2+).

The protein belongs to the sugar phosphate cyclases superfamily. Dehydroquinate synthase family. Requires Co(2+) as cofactor. Zn(2+) serves as cofactor. The cofactor is NAD(+).

It is found in the cytoplasm. It catalyses the reaction 7-phospho-2-dehydro-3-deoxy-D-arabino-heptonate = 3-dehydroquinate + phosphate. It functions in the pathway metabolic intermediate biosynthesis; chorismate biosynthesis; chorismate from D-erythrose 4-phosphate and phosphoenolpyruvate: step 2/7. Functionally, catalyzes the conversion of 3-deoxy-D-arabino-heptulosonate 7-phosphate (DAHP) to dehydroquinate (DHQ). The sequence is that of 3-dehydroquinate synthase from Bacillus cereus (strain G9842).